A 601-amino-acid chain; its full sequence is Casbene synthase, chloroplastic (601 aa).

A chloroplast-targeting transit peptide spans 1 to 56; sequence MALPSAAMQSNPEKLNLFHRLSSLPTTSLEYGNNRFPFFSSSAKSHFKKPTQACLS. 5 residues coordinate Mg(2+): Asp355, Asp359, Asn499, Ser503, and Glu507. Positions 355 to 359 match the DDXXD motif motif; that stretch reads DDTID.

The protein belongs to the terpene synthase family. The cofactor is Mg(2+).

It is found in the plastid. Its subcellular location is the chloroplast. The enzyme catalyses (2E,6E,10E)-geranylgeranyl diphosphate = casbene + diphosphate. Functionally, catalyzes the cyclization of geranylgeranyl diphosphate to casbene, a diterpene phytoalexin with antibacterial and antifungal activity. The chain is Casbene synthase, chloroplastic from Ricinus communis (Castor bean).